We begin with the raw amino-acid sequence, 505 residues long: Phase 1 flagellin (505 aa).

The protein belongs to the bacterial flagellin family.

Its subcellular location is the secreted. It localises to the bacterial flagellum. Functionally, flagellin is the subunit protein which polymerizes to form the filaments of bacterial flagella. This is Phase 1 flagellin (fliC) from Salmonella naestved.